We begin with the raw amino-acid sequence, 285 residues long: 3',5'-nucleoside bisphosphate phosphatase (285 aa).

Mn(2+) is bound by residues H7, H9, D14, H39, E64, and H75. Substrate contacts are provided by D14 and H39. Residues 99 to 102 (RLER) and 134 to 135 (RT) contribute to the substrate site. 3 residues coordinate Mn(2+): H191, D248, and H250. H250 is a binding site for substrate.

Belongs to the PHP family. In terms of assembly, monomer. Requires Mn(2+) as cofactor.

It catalyses the reaction a ribonucleoside 3',5'-bisphosphate + H2O = a ribonucleoside 5'-phosphate + phosphate. Functionally, hydrolyzes 3',5'-bisphosphonucleosides (pGp, pCp, pUp, and pIp) to nucleoside 5'-phosphate and orthophosphate. Has similar catalytic efficiencies with all the bases. Also shows activity with ribonucleoside 2'-deoxyribonucleoside 3',5'-bisphosphates. Does not show activity with nucleoside 2',5'-bisphosphates. This chain is 3',5'-nucleoside bisphosphate phosphatase, found in Chromobacterium violaceum (strain ATCC 12472 / DSM 30191 / JCM 1249 / CCUG 213 / NBRC 12614 / NCIMB 9131 / NCTC 9757 / MK).